The chain runs to 850 residues: DNA mismatch repair protein MutS (850 aa).

608–615 (GPNMGGKS) is an ATP binding site.

This sequence belongs to the DNA mismatch repair MutS family.

In terms of biological role, this protein is involved in the repair of mismatches in DNA. It is possible that it carries out the mismatch recognition step. This protein has a weak ATPase activity. The sequence is that of DNA mismatch repair protein MutS from Thiobacillus denitrificans (strain ATCC 25259 / T1).